The following is an 883-amino-acid chain: Phosphoenolpyruvate carboxylase (883 aa).

Catalysis depends on residues H138 and K546.

Belongs to the PEPCase type 1 family. Mg(2+) is required as a cofactor.

It carries out the reaction oxaloacetate + phosphate = phosphoenolpyruvate + hydrogencarbonate. Functionally, forms oxaloacetate, a four-carbon dicarboxylic acid source for the tricarboxylic acid cycle. The chain is Phosphoenolpyruvate carboxylase from Klebsiella pneumoniae (strain 342).